The sequence spans 334 residues: Glyceraldehyde-3-phosphate dehydrogenase (334 aa).

Residues 12 to 13 and glycine 111 each bind NAD(+); that span reads TI. 140-142 serves as a coordination point for D-glyceraldehyde 3-phosphate; sequence SCN. Cysteine 141 (nucleophile) is an active-site residue. An NAD(+)-binding site is contributed by arginine 167. 192 to 193 contacts D-glyceraldehyde 3-phosphate; that stretch reads HG. Residue glutamine 298 coordinates NAD(+).

This sequence belongs to the glyceraldehyde-3-phosphate dehydrogenase family. Homotetramer.

The protein resides in the cytoplasm. The catalysed reaction is D-glyceraldehyde 3-phosphate + phosphate + NADP(+) = (2R)-3-phospho-glyceroyl phosphate + NADPH + H(+). It carries out the reaction D-glyceraldehyde 3-phosphate + phosphate + NAD(+) = (2R)-3-phospho-glyceroyl phosphate + NADH + H(+). It participates in carbohydrate degradation; glycolysis; pyruvate from D-glyceraldehyde 3-phosphate: step 1/5. This chain is Glyceraldehyde-3-phosphate dehydrogenase, found in Thermococcus kodakarensis (strain ATCC BAA-918 / JCM 12380 / KOD1) (Pyrococcus kodakaraensis (strain KOD1)).